The following is a 276-amino-acid chain: 4-hydroxy-3-methylbut-2-enyl diphosphate reductase (276 aa).

[4Fe-4S] cluster is bound at residue Cys-12. 2 residues coordinate (2E)-4-hydroxy-3-methylbut-2-enyl diphosphate: His-36 and His-70. 2 residues coordinate dimethylallyl diphosphate: His-36 and His-70. Isopentenyl diphosphate-binding residues include His-36 and His-70. Residue Cys-92 coordinates [4Fe-4S] cluster. A (2E)-4-hydroxy-3-methylbut-2-enyl diphosphate-binding site is contributed by His-120. Residue His-120 coordinates dimethylallyl diphosphate. An isopentenyl diphosphate-binding site is contributed by His-120. The active-site Proton donor is Glu-122. Thr-158 is a binding site for (2E)-4-hydroxy-3-methylbut-2-enyl diphosphate. Cys-186 provides a ligand contact to [4Fe-4S] cluster. The (2E)-4-hydroxy-3-methylbut-2-enyl diphosphate site is built by Ser-214, Ser-215, Asn-216, and Ser-258. Dimethylallyl diphosphate is bound by residues Ser-214, Ser-215, Asn-216, and Ser-258. Isopentenyl diphosphate contacts are provided by Ser-214, Ser-215, Asn-216, and Ser-258.

The protein belongs to the IspH family. Requires [4Fe-4S] cluster as cofactor.

The catalysed reaction is isopentenyl diphosphate + 2 oxidized [2Fe-2S]-[ferredoxin] + H2O = (2E)-4-hydroxy-3-methylbut-2-enyl diphosphate + 2 reduced [2Fe-2S]-[ferredoxin] + 2 H(+). It carries out the reaction dimethylallyl diphosphate + 2 oxidized [2Fe-2S]-[ferredoxin] + H2O = (2E)-4-hydroxy-3-methylbut-2-enyl diphosphate + 2 reduced [2Fe-2S]-[ferredoxin] + 2 H(+). Its pathway is isoprenoid biosynthesis; dimethylallyl diphosphate biosynthesis; dimethylallyl diphosphate from (2E)-4-hydroxy-3-methylbutenyl diphosphate: step 1/1. The protein operates within isoprenoid biosynthesis; isopentenyl diphosphate biosynthesis via DXP pathway; isopentenyl diphosphate from 1-deoxy-D-xylulose 5-phosphate: step 6/6. Catalyzes the conversion of 1-hydroxy-2-methyl-2-(E)-butenyl 4-diphosphate (HMBPP) into a mixture of isopentenyl diphosphate (IPP) and dimethylallyl diphosphate (DMAPP). Acts in the terminal step of the DOXP/MEP pathway for isoprenoid precursor biosynthesis. The chain is 4-hydroxy-3-methylbut-2-enyl diphosphate reductase from Wolinella succinogenes (strain ATCC 29543 / DSM 1740 / CCUG 13145 / JCM 31913 / LMG 7466 / NCTC 11488 / FDC 602W) (Vibrio succinogenes).